The sequence spans 100 residues: Aspartyl/glutamyl-tRNA(Asn/Gln) amidotransferase subunit C (100 aa).

The protein belongs to the GatC family. As to quaternary structure, heterotrimer of A, B and C subunits.

The catalysed reaction is L-glutamyl-tRNA(Gln) + L-glutamine + ATP + H2O = L-glutaminyl-tRNA(Gln) + L-glutamate + ADP + phosphate + H(+). The enzyme catalyses L-aspartyl-tRNA(Asn) + L-glutamine + ATP + H2O = L-asparaginyl-tRNA(Asn) + L-glutamate + ADP + phosphate + 2 H(+). Allows the formation of correctly charged Asn-tRNA(Asn) or Gln-tRNA(Gln) through the transamidation of misacylated Asp-tRNA(Asn) or Glu-tRNA(Gln) in organisms which lack either or both of asparaginyl-tRNA or glutaminyl-tRNA synthetases. The reaction takes place in the presence of glutamine and ATP through an activated phospho-Asp-tRNA(Asn) or phospho-Glu-tRNA(Gln). In Rickettsia rickettsii (strain Sheila Smith), this protein is Aspartyl/glutamyl-tRNA(Asn/Gln) amidotransferase subunit C.